A 280-amino-acid polypeptide reads, in one-letter code: Alpha-methyl-mannoside-specific lectin (280 aa).

Residues 1–26 (MAISKKILPLLSIATIFLLLLNKAHS) form the signal peptide. The a carbohydrate site is built by Asp-114 and Gly-134. Mn(2+) contacts are provided by Glu-156 and Asp-158. Ca(2+) contacts are provided by Asp-158 and Phe-160. Residues Ser-165 and Asn-166 each coordinate a carbohydrate. Ca(2+) is bound by residues Asn-166 and Asp-169. 2 residues coordinate Mn(2+): Asp-169 and His-174. A carbohydrate contacts are provided by Gly-248 and Gln-250.

It belongs to the leguminous lectin family. In terms of assembly, homodimer. Glycosylated.

Its function is as follows. Alpha-methyl-D-mannoside-specific lectin. Has hemagglutinating activity towards rabbit erythrocytes. Binds to cytokinins and significantly inhibits physiological effects of cytokinin activity such as cotyledon expansion and delayed leaf senescence. In Arachis hypogaea (Peanut), this protein is Alpha-methyl-mannoside-specific lectin.